Consider the following 609-residue polypeptide: mRNA cap guanine-N(7) methyltransferase (609 aa).

Basic and acidic residues predominate over residues 1–10 (MASKEEERTG). A disordered region spans residues 1-252 (MASKEEERTG…EEDAMRNSQS (252 aa)). Composition is skewed to low complexity over residues 28-47 (QPVV…ATPT) and 70-87 (PQTT…QQKQ). Residues 148–163 (ANDRPISKRKRLEERH) are compositionally biased toward basic and acidic residues. Over residues 193–205 (PRSPSPPLPPRSP) the composition is skewed to pro residues. Basic and acidic residues predominate over residues 233 to 247 (RRQEERERALEEDAM). Residues 278–590 (SKIKGLRSFN…KYTPLGFTSA (313 aa)) form the mRNA cap 0 methyltransferase domain. 287-288 (NN) is an mRNA binding site. Residues Lys291, Gly314, Asp338, Asp379, 422-424 (MFA), and Tyr427 each bind S-adenosyl-L-methionine.

It belongs to the class I-like SAM-binding methyltransferase superfamily. mRNA cap 0 methyltransferase family.

Its subcellular location is the nucleus. The catalysed reaction is a 5'-end (5'-triphosphoguanosine)-ribonucleoside in mRNA + S-adenosyl-L-methionine = a 5'-end (N(7)-methyl 5'-triphosphoguanosine)-ribonucleoside in mRNA + S-adenosyl-L-homocysteine. Its function is as follows. Responsible for methylating the 5'-cap structure of mRNAs. This Aspergillus niger (strain ATCC MYA-4892 / CBS 513.88 / FGSC A1513) protein is mRNA cap guanine-N(7) methyltransferase (abd1).